The sequence spans 674 residues: Xaa-Pro aminopeptidase 2 (674 aa).

Positions 1 to 22 (MAQAYWQCYPWLVLLCACAWSY) are cleaved as a signal peptide. N-linked (GlcNAc...) asparagine glycosylation occurs at asparagine 65. Arginine 116 serves as a coordination point for substrate. 2 N-linked (GlcNAc...) asparagine glycosylation sites follow: asparagine 278 and asparagine 293. Residue histidine 430 coordinates substrate. 3 residues coordinate Zn(2+): aspartate 450, aspartate 461, and histidine 524. Substrate-binding residues include histidine 524, histidine 533, and glutamate 555. Residues glutamate 555 and glutamate 569 each coordinate Zn(2+). The GPI-anchor amidated alanine moiety is linked to residue alanine 650. Residues 651 to 674 (SAPHTTSLASMWVASALAILSWSC) constitute a propeptide, removed in mature form.

It belongs to the peptidase M24B family. As to quaternary structure, homotrimer. Zn(2+) serves as cofactor. In terms of processing, N-glycosylated. As to expression, expressed strongly in lung, liver and heart, and at lower levels in kidney, testis, brain, spleen and skeletal muscle.

The protein resides in the cell membrane. It carries out the reaction Release of any N-terminal amino acid, including proline, that is linked to proline, even from a dipeptide or tripeptide.. Its activity is regulated as follows. Inhibited by the chelating agents 1,10-phenanthroline and EDTA. Inhibited by the thiol-containing compounds 2-mercaptoethanol and dithiothreitol. Also inhibited by apstatin, captopril and p-(ch1oromercuri)benzenesulfonic acid. Weakly inhibited by D,L-2-mercaptomethyl-3-guanidinoethylthiopropanoic acid and N-[l-(R,S)-carboxy-(2-phenylethyl)]-Ala-Ala-Phe-p-aminobenzoate. Inhibited by ramiprilat and enalaprilat, in a Mn(2+)-dependent manner. Metal ions have a complex substrate- and concentration-dependent effect on activity. Activity towards Arg-Pro-Pro and Gly-Pro-Hyp is stimulated by Mn(2+) ion concentrations of 10-100 uM and then inhibited at Mn(2+) concentrations of 1-2 mM. Mn(2+) concentrations in excess of 2 mM stimulate activity towards Gly-Pro-Hyp but inhibit activity towards Arg-Pro-Pro. Zn(2+) and Co(2+) ions also inhibit activity towards Arg-Pro-Pro at high concentrations. Activity towards bradykinin is inhibited by Mn(2+) concentrations in excess of 1 mM. Functionally, membrane-bound metalloprotease which catalyzes the removal of a penultimate prolyl residue from the N-termini of peptides, such as Arg-Pro-Pro. May play a role in the metabolism of the vasodilator bradykinin. This is Xaa-Pro aminopeptidase 2 from Rattus norvegicus (Rat).